Consider the following 395-residue polypeptide: SWI/SNF and RSC complexes subunit ssr4 (395 aa).

The disordered stretch occupies residues 182-230 (KKHIPEGTALSQRETLPNMGSAQMKSQSRTPSFSNVTTSPVPPINSNAT). Residues 190 to 230 (ALSQRETLPNMGSAQMKSQSRTPSFSNVTTSPVPPINSNAT) are compositionally biased toward polar residues.

This sequence belongs to the SSR4 family. Component of the RSC complex composed of at least arp9, arp42, rsc1, rsc4, rsc7, rsc9, rsc58, sfh1, snf21, ssr1, ssr2, ssr3 and ssr4. The complex interacts with histone and histone variant components of centromeric chromatin. Component of the SWI/SNF global transcription activator complex composed of at least arp9, arp42, snf5, snf22, snf30, sbf59, sol1, ssr1, ssr2, ssr3, ssr4 and tfg3.

The protein resides in the cytoplasm. It localises to the nucleus. Its function is as follows. Component of the chromatin structure remodeling complex (RSC), which is involved in transcription regulation and nucleosome positioning. Controls particularly membrane and organelle development genes. Part of the SWI/SNF complex, an ATP-dependent chromatin remodeling complex, required for the positive and negative regulation of gene expression of a large number of genes. It changes chromatin structure by altering DNA-histone contacts within a nucleosome, leading eventually to a change in nucleosome position, thus facilitating or repressing binding of gene-specific transcription factors. The sequence is that of SWI/SNF and RSC complexes subunit ssr4 (ssr4) from Schizosaccharomyces pombe (strain 972 / ATCC 24843) (Fission yeast).